A 288-amino-acid polypeptide reads, in one-letter code: Pantothenate synthetase (288 aa).

30–37 contacts ATP; the sequence is MGNLHAGH. His-37 acts as the Proton donor in catalysis. Gln-61 is a binding site for (R)-pantoate. A beta-alanine-binding site is contributed by Gln-61. 149 to 152 is a binding site for ATP; sequence GLKD. Gln-155 is a binding site for (R)-pantoate. ATP is bound by residues Ile-178 and 186 to 189; that span reads LSSR.

This sequence belongs to the pantothenate synthetase family. In terms of assembly, homodimer.

The protein localises to the cytoplasm. The catalysed reaction is (R)-pantoate + beta-alanine + ATP = (R)-pantothenate + AMP + diphosphate + H(+). Its pathway is cofactor biosynthesis; (R)-pantothenate biosynthesis; (R)-pantothenate from (R)-pantoate and beta-alanine: step 1/1. In terms of biological role, catalyzes the condensation of pantoate with beta-alanine in an ATP-dependent reaction via a pantoyl-adenylate intermediate. This Colwellia psychrerythraea (strain 34H / ATCC BAA-681) (Vibrio psychroerythus) protein is Pantothenate synthetase.